The following is a 99-amino-acid chain: UPF0235 protein Sbal_3028 (99 aa).

The protein belongs to the UPF0235 family.

In Shewanella baltica (strain OS155 / ATCC BAA-1091), this protein is UPF0235 protein Sbal_3028.